Here is a 901-residue protein sequence, read N- to C-terminus: Alanine--tRNA ligase (901 aa).

Zn(2+) is bound by residues His-581, His-585, Cys-684, and His-688.

Belongs to the class-II aminoacyl-tRNA synthetase family. Zn(2+) is required as a cofactor.

The protein localises to the cytoplasm. It carries out the reaction tRNA(Ala) + L-alanine + ATP = L-alanyl-tRNA(Ala) + AMP + diphosphate. Functionally, catalyzes the attachment of alanine to tRNA(Ala) in a two-step reaction: alanine is first activated by ATP to form Ala-AMP and then transferred to the acceptor end of tRNA(Ala). Also edits incorrectly charged Ser-tRNA(Ala) and Gly-tRNA(Ala) via its editing domain. The protein is Alanine--tRNA ligase of Mycobacterium ulcerans (strain Agy99).